A 164-amino-acid chain; its full sequence is Transcriptional regulator MraZ (164 aa).

SpoVT-AbrB domains follow at residues R7–V63 and L92–R135.

Belongs to the MraZ family. As to quaternary structure, forms oligomers.

The protein resides in the cytoplasm. Its subcellular location is the nucleoid. The sequence is that of Transcriptional regulator MraZ from Chlorobaculum parvum (strain DSM 263 / NCIMB 8327) (Chlorobium vibrioforme subsp. thiosulfatophilum).